The chain runs to 261 residues: Phosphate import ATP-binding protein PstB 4 (261 aa).

The ABC transporter domain maps to 8-256; the sequence is IKVNNLSFYY…PHDSRTREYV (249 aa). 40-47 provides a ligand contact to ATP; the sequence is GPSGCGKS.

Belongs to the ABC transporter superfamily. Phosphate importer (TC 3.A.1.7) family. The complex is composed of two ATP-binding proteins (PstB), two transmembrane proteins (PstC and PstA) and a solute-binding protein (PstS).

It localises to the cell inner membrane. The catalysed reaction is phosphate(out) + ATP + H2O = ADP + 2 phosphate(in) + H(+). Its function is as follows. Part of the ABC transporter complex PstSACB involved in phosphate import. Responsible for energy coupling to the transport system. The protein is Phosphate import ATP-binding protein PstB 4 of Trichormus variabilis (strain ATCC 29413 / PCC 7937) (Anabaena variabilis).